Here is a 1145-residue protein sequence, read N- to C-terminus: MESLLLPVLLLLAVLWTQAAALINLKYSVEEEQRAGTVIANVAKDAREAGFALDPRQASAFRVVSNSAPHLVDINPSSGLLVTKQKIDRDLLCRQSPKCIISLEVMSSSMEICVIKVEIKDLNDNAPSFPAAQIELEISEAASPGTRIPLDSAYDPDSGSFGVQTYELTPNELFGLEIKTRGDGSRFAELVVEKSLDRETQSHYSFRITALDGGDPPHMGTVGLSIKVTDSNDNNPVFGESTYSVSVPENSPPNTPVIRLNASDPDEGTNGQVVYSFYGYVNDRTRELFQIDPHSGLVTVTGALDYEEGHVYELDVQAKDLGPNSIPAHCKVTVSVLDTNDNPPIINLLSVNSELVEVSESAPPGYVIALVRVSDRDSGLNGRVQCRLLGNVPFRLQEYESFSTILVDGRLDREQHDQYNLTIQARDSGVPMLQSAKSFTVRITDENDNHPHFSKPYYQVIVQENNTPGAYLLSVSARDPDMGLNGSVSYQIVPSQVRDMPVFTYVSINPNSGDIYALRSFNHEQTKAFEFKVLAKDGGLPSLQSNATVRVIILDVNDNTPVITAPPLINGTAEVYIPRNSGIGYLVTVVKADDYDEGENGRVTYDMTEGDRGFFEIDQVNGEVRTTRTFNENSKPSYELIVVAHDHGKTSLSASALVLIYLSPALDAQESMGSVNLSLIFIIALGSIAGILFVTMIFVAIKCKRDNKEIRTYNCSNCLTITCLLGCFIKGQNSKCLHCISVSPNSEEQDKKAEEKVSLRGKRIAEYSYGHQKKSSKKKKISKNDIRLVPRDVEETDKMNVVSCSSLTSSLNYFDYHQQTLPLGCRRSESTFLNVENQNTRNTTASHIYHHSFNSQGPQQPDLIINGVPLPETENYSFDSNYVNSRAHLIKSSSTFKDLEGNSLKDSGHEESDQTDSEHDVQRSLYCDTAVNDVLNTSVTSMGSQMPDHDQNEGFHCREECRILGHSDRCWMPRNPMPTRSKSPEHVRNIIALSIEATAADVEAYDDCGPTKRTFATFGKDVSSHRAEERPILKGKRTVDVTICSPKVNSAIREAGNGCEAISPVTSPLHLKSPLPTKPSISYTVALAPPAHDLEHHANSGASRPSEAEPRGADNEKVMHEVNPIRKDGRDKESPSVKRLKDIVL.

The signal sequence occupies residues 1-21; the sequence is MESLLLPVLLLLAVLWTQAAA. 6 consecutive Cadherin domains span residues 22–129, 130–238, 239–346, 350–453, 454–563, and 569–672; these read LINL…APSF, PAAQ…NPVF, GEST…PPII, SVNS…HPHF, SKPY…TPVI, and INGT…QESM. Residues 22-678 lie on the Extracellular side of the membrane; the sequence is LINLKYSVEE…QESMGSVNLS (657 aa). Residues Glu31, Glu32, Asp88, and Asp90 each coordinate Ca(2+). A disulfide bridge links Cys93 with Cys99. Ca(2+) contacts are provided by Asp121, Asn123, Asp124, Asn125, Glu140, Asp155, Asp157, Glu199, Asp212, Asp230, Ser231, Asn232, Asp233, Asn234, and Glu249. Asn261 carries N-linked (GlcNAc...) asparagine glycosylation. Ca(2+)-binding residues include Asp264, Asp266, Asn270, Asp305, Glu307, Asp338, Asn340, Asp341, Asn342, Glu360, Asp375, Asp377, Asn381, Asp412, and Glu414. Asn420 carries an N-linked (GlcNAc...) asparagine glycan. Ca(2+) contacts are provided by Asp427, Asp445, Glu446, Asn447, Asp448, Asn449, Glu464, Asp479, Asp481, Asn485, Asn522, Glu524, and Asp537. N-linked (GlcNAc...) asparagine glycosylation is present at Asn485. Residue Asn546 is glycosylated (N-linked (GlcNAc...) asparagine). 5 residues coordinate Ca(2+): Asp555, Val556, Asn557, Asp558, and Asn559. An N-linked (GlcNAc...) asparagine glycan is attached at Asn570. Residues Asp594, Asp596, Asn600, and Asp646 each contribute to the Ca(2+) site. N-linked (GlcNAc...) asparagine glycosylation is present at Asn676. Residues 679 to 699 form a helical membrane-spanning segment; it reads LIFIIALGSIAGILFVTMIFV. Over 700–1145 the chain is Cytoplasmic; sequence AIKCKRDNKE…SVKRLKDIVL (446 aa). 2 disordered regions span residues 901–921 and 1094–1145; these read GNSLKDSGHEESDQTDSEHDV and LEHH…DIVL. Basic and acidic residues-rich tracts occupy residues 906–921 and 1106–1145; these read DSGHEESDQTDSEHDV and SEAEPRGADNEKVMHEVNPIRKDGRDKESPSVKRLKDIVL.

As to quaternary structure, homodimer; antiparallel.

The protein resides in the cell membrane. In terms of biological role, calcium-dependent cell-adhesion protein. The sequence is that of Protocadherin-19 (Pcdh19) from Mus musculus (Mouse).